Here is a 361-residue protein sequence, read N- to C-terminus: Mitogen-activated protein kinase 14B (361 aa).

The Protein kinase domain maps to 25 to 309 (YQNLSPVGSG…ASQALAHPYF (285 aa)). Residues 31 to 39 (VGSGAYGSV) and lysine 54 each bind ATP. Aspartate 151 acts as the Proton acceptor in catalysis. Threonine 181 bears the Phosphothreonine; by MAP2K6 mark. The short motif at 181 to 183 (TGY) is the TXY element. Residue tyrosine 183 is modified to Phosphotyrosine; by MAP2K6.

The protein belongs to the protein kinase superfamily. CMGC Ser/Thr protein kinase family. MAP kinase subfamily. Requires Mg(2+) as cofactor. Dually phosphorylated on Thr-181 and Tyr-183, which activates the enzyme. Predominantly expressed in the ovary. Lower levels present in brain, gill, heart, spleen, kidney, muscle and gut.

The protein resides in the cytoplasm. Its subcellular location is the nucleus. The enzyme catalyses L-seryl-[protein] + ATP = O-phospho-L-seryl-[protein] + ADP + H(+). The catalysed reaction is L-threonyl-[protein] + ATP = O-phospho-L-threonyl-[protein] + ADP + H(+). Its activity is regulated as follows. Activated by threonine and tyrosine phosphorylation by the dual specificity kinase, MKK6. Its function is as follows. Serine/threonine kinase which acts as an essential component of the MAP kinase signal transduction pathway. Mapk14b is one of the four p38 MAPKs which play an important role in the cascades of cellular responses evoked by extracellular stimuli such as pro-inflammatory cytokines or physical stress leading to direct activation of transcription factors. Accordingly, p38 MAPKs phosphorylate a broad range of proteins and it has been estimated that they may have approximately 200 to 300 substrates each. Some of the targets are downstream kinases which are activated through phosphorylation and further phosphorylate additional targets. This Cyprinus carpio (Common carp) protein is Mitogen-activated protein kinase 14B (mapk14b).